Reading from the N-terminus, the 342-residue chain is Outer spore wall protein RRT8 (342 aa).

The Cytoplasmic portion of the chain corresponds to 1–109 (MKAGIELISH…VLTNPVYWKH (109 aa)). A helical transmembrane segment spans residues 110–130 (ILLFAVCYALIFVTIAGLFYV). A topological domain (extracellular) is located at residue threonine 131. The chain crosses the membrane as a helical span at residues 132 to 152 (LVPLLVTWAILLLGPLGVILV). Over 153–240 (HIQWILQTNV…PRLLFRMFFK (88 aa)) the chain is Cytoplasmic. The helical transmembrane segment at 241–261 (VSNFTSLTLLSLIPIVGPILA) threads the bilayer. Over 262-299 (NQLMAPKRTFTYLQRYFLLKGFSKKQAKDFQYEHYASF) the chain is Extracellular. A helical transmembrane segment spans residues 300-320 (ICFGMSAGLLELIPFFTIVTI). The Cytoplasmic portion of the chain corresponds to 321–342 (SSNTVGAAKWCTSLLKGERKKE).

It belongs to the LDS family.

The protein localises to the prospore membrane. Its subcellular location is the lipid droplet. It is found in the spore wall. In terms of biological role, involved in spore wall assembly. May be involved in the modulation of rDNA transcription. This Saccharomyces cerevisiae (strain ATCC 204508 / S288c) (Baker's yeast) protein is Outer spore wall protein RRT8.